Consider the following 615-residue polypeptide: Chromosomal replication initiator protein DnaA (615 aa).

Positions 1–88 (MSEGQINLAM…RVAVTVDPSA (88 aa)) are domain I, interacts with DnaA modulators. The disordered stretch occupies residues 85–272 (DPSAVPPSAP…PTSGGPDQLN (188 aa)). Residues 88–269 (AVPPSAPTEE…STNPTSGGPD (182 aa)) form a domain II region. Composition is skewed to low complexity over residues 94–112 (PTEE…PAPD) and 173–190 (PSSA…VAES). A domain III, AAA+ region region spans residues 270–486 (QLNPKYTFDT…GALIRVTAFA (217 aa)). Positions 314, 316, 317, and 318 each coordinate ATP. The domain IV, binds dsDNA stretch occupies residues 487 to 615 (SLNRQSVDLH…QQAHHNHHHL (129 aa)).

Belongs to the DnaA family. As to quaternary structure, oligomerizes as a right-handed, spiral filament on DNA at oriC.

The protein resides in the cytoplasm. Functionally, plays an essential role in the initiation and regulation of chromosomal replication. ATP-DnaA binds to the origin of replication (oriC) to initiate formation of the DNA replication initiation complex once per cell cycle. Binds the DnaA box (a 9 base pair repeat at the origin) and separates the double-stranded (ds)DNA. Forms a right-handed helical filament on oriC DNA; dsDNA binds to the exterior of the filament while single-stranded (ss)DNA is stabiized in the filament's interior. The ATP-DnaA-oriC complex binds and stabilizes one strand of the AT-rich DNA unwinding element (DUE), permitting loading of DNA polymerase. After initiation quickly degrades to an ADP-DnaA complex that is not apt for DNA replication. Binds acidic phospholipids. This Thermobifida fusca (strain YX) protein is Chromosomal replication initiator protein DnaA.